A 158-amino-acid chain; its full sequence is GTP-dependent dephospho-CoA kinase (158 aa).

The GTP site is built by Asp-35, Val-36, Asp-54, Lys-56, Glu-109, and Asp-132.

It belongs to the GTP-dependent DPCK family.

The enzyme catalyses 3'-dephospho-CoA + GTP = GDP + CoA + H(+). It functions in the pathway cofactor biosynthesis; coenzyme A biosynthesis. Catalyzes the GTP-dependent phosphorylation of the 3'-hydroxyl group of dephosphocoenzyme A to form coenzyme A (CoA). The chain is GTP-dependent dephospho-CoA kinase from Methanococcus vannielii (strain ATCC 35089 / DSM 1224 / JCM 13029 / OCM 148 / SB).